Consider the following 219-residue polypeptide: Ribose-5-phosphate isomerase A (219 aa).

Residues 28–31 (TGST), 81–84 (DGAD), and 94–97 (KGGG) contribute to the substrate site. Glu-103 (proton acceptor) is an active-site residue. Residue Lys-121 participates in substrate binding.

It belongs to the ribose 5-phosphate isomerase family. In terms of assembly, homodimer.

It carries out the reaction aldehydo-D-ribose 5-phosphate = D-ribulose 5-phosphate. The protein operates within carbohydrate degradation; pentose phosphate pathway; D-ribose 5-phosphate from D-ribulose 5-phosphate (non-oxidative stage): step 1/1. Its function is as follows. Catalyzes the reversible conversion of ribose-5-phosphate to ribulose 5-phosphate. The polypeptide is Ribose-5-phosphate isomerase A (Erwinia tasmaniensis (strain DSM 17950 / CFBP 7177 / CIP 109463 / NCPPB 4357 / Et1/99)).